Here is a 343-residue protein sequence, read N- to C-terminus: Dihydroorotate dehydrogenase (quinone) (343 aa).

FMN is bound by residues 61-65 and threonine 85; that span reads AGLDK. Lysine 65 lines the substrate pocket. 110-114 provides a ligand contact to substrate; sequence NRMGF. Residues asparagine 138 and asparagine 171 each contribute to the FMN site. Residue asparagine 171 coordinates substrate. Serine 174 functions as the Nucleophile in the catalytic mechanism. Asparagine 176 is a binding site for substrate. Positions 216 and 244 each coordinate FMN. Substrate is bound at residue 245–246; it reads NT. Residues glycine 267, glycine 296, and 317-318 each bind FMN; that span reads YS.

It belongs to the dihydroorotate dehydrogenase family. Type 2 subfamily. As to quaternary structure, monomer. The cofactor is FMN.

It is found in the cell membrane. It catalyses the reaction (S)-dihydroorotate + a quinone = orotate + a quinol. It functions in the pathway pyrimidine metabolism; UMP biosynthesis via de novo pathway; orotate from (S)-dihydroorotate (quinone route): step 1/1. In terms of biological role, catalyzes the conversion of dihydroorotate to orotate with quinone as electron acceptor. The sequence is that of Dihydroorotate dehydrogenase (quinone) from Pseudomonas syringae pv. tomato (strain ATCC BAA-871 / DC3000).